The chain runs to 607 residues: Protein NRT1/ PTR FAMILY 1.2 (607 aa).

10 consecutive transmembrane segments (helical) span residues 65 to 85 (TNVL…GAFL), 96 to 116 (ISIA…TAML), 138 to 158 (ASQL…SGGI), 185 to 205 (FFGW…TGIV), 215 to 235 (IGFG…ILAS), 374 to 394 (VPAG…VILY), 418 to 438 (MGLG…VESF), 460 to 480 (AMWL…TAIG), 496 to 516 (IAAS…SVVL), and 544 to 564 (YYWV…ICSW). At Ser-601 the chain carries Phosphoserine.

It belongs to the major facilitator superfamily. Proton-dependent oligopeptide transporter (POT/PTR) (TC 2.A.17) family. Expressed in shoots, stems, leaves, flowers and siliques. Mainly detected in larger expanded leaves, in the companion cells of major veins.

The protein localises to the cell membrane. In terms of biological role, low-affinity nitrate transporter involved in xylem-to-phloem transfer for redistributing nitrate into developing leaves. Not involved in dipeptides transport. In Arabidopsis thaliana (Mouse-ear cress), this protein is Protein NRT1/ PTR FAMILY 1.2 (NPF1.2).